A 304-amino-acid chain; its full sequence is UDP-N-acetylenolpyruvoylglucosamine reductase (304 aa).

In terms of domain architecture, FAD-binding PCMH-type spans 31–196; sequence KVGGPADYLA…ISAKFNLKPG (166 aa). Arg175 is a catalytic residue. Ser225 functions as the Proton donor in the catalytic mechanism. Glu295 is an active-site residue.

It belongs to the MurB family. FAD is required as a cofactor.

The protein localises to the cytoplasm. The enzyme catalyses UDP-N-acetyl-alpha-D-muramate + NADP(+) = UDP-N-acetyl-3-O-(1-carboxyvinyl)-alpha-D-glucosamine + NADPH + H(+). Its pathway is cell wall biogenesis; peptidoglycan biosynthesis. Functionally, cell wall formation. The chain is UDP-N-acetylenolpyruvoylglucosamine reductase from Streptococcus thermophilus (strain CNRZ 1066).